The following is a 391-amino-acid chain: Ectodysplasin-A (391 aa).

Residues 1 to 21 (MGYPEVERREPLPAAAPRERG) are compositionally biased toward basic and acidic residues. The disordered stretch occupies residues 1 to 28 (MGYPEVERREPLPAAAPRERGSQGCGCR). The Cytoplasmic segment spans residues 1-41 (MGYPEVERREPLPAAAPRERGSQGCGCRGAPARAGEGNSCR). A helical; Signal-anchor for type II membrane protein membrane pass occupies residues 42-62 (LFLGFFGLSLALHLLTLCCYL). The Extracellular segment spans residues 63-391 (ELRSELRRER…AIRLGEAPAS (329 aa)). Disordered regions lie at residues 73-130 (GAES…SQDG) and 145-245 (SYSE…GTRE). Low complexity predominate over residues 76–96 (SRFSGPGTPGTSGTLSSPGGL). Residues 180 to 229 (GPPGPNGPPGPPGPPGPQGPPGIPGIPGIPGTTVMGPPGPPGPPGPQGPP) form the Collagen-like domain. Pro residues-rich tracts occupy residues 181–203 (PPGPNGPPGPPGPPGPQGPPGIP) and 216–228 (PPGPPGPPGPQGP). A THD domain is found at 249–385 (AVVHLQGQGS…HTTFFGAIRL (137 aa)). Asparagine 313 carries an N-linked (GlcNAc...) asparagine glycan. Cysteine 332 and cysteine 346 are disulfide-bonded. N-linked (GlcNAc...) asparagine glycosylation occurs at asparagine 372.

It belongs to the tumor necrosis factor family. Homotrimer. The homotrimers may then dimerize and form higher-order oligomers. In terms of processing, N-glycosylated. Processing by furin produces a secreted form.

Its subcellular location is the cell membrane. It localises to the secreted. In terms of biological role, cytokine which is involved in epithelial-mesenchymal signaling during morphogenesis of ectodermal organs. Functions as a ligand activating the DEATH-domain containing receptors EDAR and EDA2R. Isoform A1 binds only to the receptor EDAR, while isoform A2 binds exclusively to the receptor EDA2R. May also play a role in cell adhesion. Isoform A1 binds only to the receptor EDAR, while isoform A2 binds exclusively to the receptor EDA2R. Its function is as follows. Isoform A2 binds exclusively to the receptor EDA2R. The sequence is that of Ectodysplasin-A (EDA) from Bos taurus (Bovine).